A 77-amino-acid polypeptide reads, in one-letter code: Sec-independent protein translocase protein TatA (77 aa).

Residues 1–21 (MGSLSIWHWILVIAVVLLLFG) form a helical membrane-spanning segment. Residues 42-60 (GMQDDDKPADKPEPAKSIE) show a composition bias toward basic and acidic residues. The interval 42 to 77 (GMQDDDKPADKPEPAKSIEHNAAPTAARSDVGSKAV) is disordered.

This sequence belongs to the TatA/E family. The Tat system comprises two distinct complexes: a TatABC complex, containing multiple copies of TatA, TatB and TatC subunits, and a separate TatA complex, containing only TatA subunits. Substrates initially bind to the TatABC complex, which probably triggers association of the separate TatA complex to form the active translocon.

It localises to the cell inner membrane. Functionally, part of the twin-arginine translocation (Tat) system that transports large folded proteins containing a characteristic twin-arginine motif in their signal peptide across membranes. TatA could form the protein-conducting channel of the Tat system. This chain is Sec-independent protein translocase protein TatA, found in Bradyrhizobium diazoefficiens (strain JCM 10833 / BCRC 13528 / IAM 13628 / NBRC 14792 / USDA 110).